Here is a 184-residue protein sequence, read N- to C-terminus: ATP synthase subunit b, chloroplastic (184 aa).

The chain crosses the membrane as a helical span at residues 27 to 49 (LATNPINLSVVLGVLIFFGKGVL).

The protein belongs to the ATPase B chain family. As to quaternary structure, F-type ATPases have 2 components, F(1) - the catalytic core - and F(0) - the membrane proton channel. F(1) has five subunits: alpha(3), beta(3), gamma(1), delta(1), epsilon(1). F(0) has four main subunits: a(1), b(1), b'(1) and c(10-14). The alpha and beta chains form an alternating ring which encloses part of the gamma chain. F(1) is attached to F(0) by a central stalk formed by the gamma and epsilon chains, while a peripheral stalk is formed by the delta, b and b' chains.

It is found in the plastid. The protein localises to the chloroplast thylakoid membrane. F(1)F(0) ATP synthase produces ATP from ADP in the presence of a proton or sodium gradient. F-type ATPases consist of two structural domains, F(1) containing the extramembraneous catalytic core and F(0) containing the membrane proton channel, linked together by a central stalk and a peripheral stalk. During catalysis, ATP synthesis in the catalytic domain of F(1) is coupled via a rotary mechanism of the central stalk subunits to proton translocation. Functionally, component of the F(0) channel, it forms part of the peripheral stalk, linking F(1) to F(0). The polypeptide is ATP synthase subunit b, chloroplastic (Gossypium barbadense (Sea Island cotton)).